The following is a 211-amino-acid chain: Peptide methionine sulfoxide reductase MsrA (211 aa).

Residue Cys52 is part of the active site.

The protein belongs to the MsrA Met sulfoxide reductase family.

The catalysed reaction is L-methionyl-[protein] + [thioredoxin]-disulfide + H2O = L-methionyl-(S)-S-oxide-[protein] + [thioredoxin]-dithiol. The enzyme catalyses [thioredoxin]-disulfide + L-methionine + H2O = L-methionine (S)-S-oxide + [thioredoxin]-dithiol. In terms of biological role, has an important function as a repair enzyme for proteins that have been inactivated by oxidation. Catalyzes the reversible oxidation-reduction of methionine sulfoxide in proteins to methionine. This is Peptide methionine sulfoxide reductase MsrA from Klebsiella pneumoniae (strain 342).